Reading from the N-terminus, the 564-residue chain is MILARDDKWTLGSIALIFVLLIGFALLFLLERFRVKEKSRTFKDCVNVYQCPSKGERVYLALRHWFIFLATHKAQMTLILSPLVMLVTIPFTGKETKNSIASYDWNLTGVAARLGYLSCGLFFVSYFFSLKNNPFCLMLFSSHEKMNYLHRWLSVYAVLISVLHGILFMIFSAQSYKPLLYDKISIYGYFITVVLFLMTVASLPSVRRKFFEWFFVLHHTCSVLIIFLIWLHHPRTIVYMKACIIIYAFDRGCRLFRSIWNRSNFRIYLLNEDMIYMVGRKPKRSFFALPWAAGSHVYINIPSLSYWQVHPFTLASAPFDDFIELFVAVHSGFTERLANRLYSMPHEYPNFSLAPGTPESLSNTYRELNSFKSYAVEIENTAQGHTYEPEDLYLETTVFMDGPYGTTSNVFKEYSYVLLIAGGVGFSYTLPILRDLILKECNVTSITFIWSCRSLSLLKVASKSLNSLLHQSNVRLKIINHFTGSISCKESSEFSNQTTENSEMEFFDDRPDLDMYIQKFFDYVGYQTAALAACGSQSFLKRIKNSVNKSISSTTDIYQHYEEL.

The next 2 membrane-spanning stretches (helical) occupy residues 10–30 (TLGSIALIFVLLIGFALLFLL) and 66–86 (FIFLATHKAQMTLILSPLVML). The N-linked (GlcNAc...) asparagine glycan is linked to N106. Residues 110–130 (VAARLGYLSCGLFFVSYFFSL) form a helical membrane-spanning segment. One can recognise a Ferric oxidoreductase domain in the interval 114-229 (LGYLSCGLFF…TCSVLIIFLI (116 aa)). Residues H150 and H164 each contribute to the heme site. 3 consecutive transmembrane segments (helical) span residues 152-172 (WLSVYAVLISVLHGILFMIFS), 184-204 (ISIYGYFITVVLFLMTVASLP), and 210-230 (FFEWFFVLHHTCSVLIIFLIW). Residues H218 and H232 each coordinate heme. The FAD-binding FR-type domain maps to 254 to 410 (RLFRSIWNRS…DGPYGTTSNV (157 aa)). N261 carries an N-linked (GlcNAc...) asparagine glycan. Residue 310 to 316 (HPFTLAS) participates in FAD binding. N350 carries an N-linked (GlcNAc...) asparagine glycan. 419–427 (LIAGGVGFS) provides a ligand contact to NAD(+). Residues N442, N496, and N548 are each glycosylated (N-linked (GlcNAc...) asparagine).

It belongs to the ferric reductase (FRE) family. FAD serves as cofactor. The cofactor is heme.

The protein resides in the cell membrane. It is found in the endoplasmic reticulum membrane. The enzyme catalyses 2 a Fe(II)-siderophore + NADP(+) + H(+) = 2 a Fe(III)-siderophore + NADPH. Its function is as follows. Metalloreductase responsible for reducing extracellular iron and copper prior to import. Catalyzes the reductive uptake of Fe(3+)-salts and Fe(3+) bound to catecholate or hydroxamate siderophores. Fe(3+) is reduced to Fe(2+), which then dissociates from the siderophore and can be imported by the high-affinity Fe(2+) transport complex in the plasma membrane. Also participates in Cu(2+) reduction and Cu(+) uptake. This Schizosaccharomyces pombe (strain 972 / ATCC 24843) (Fission yeast) protein is Ferric/cupric reductase transmembrane component 2 (frp2).